We begin with the raw amino-acid sequence, 116 residues long: Large ribosomal subunit protein bL20 (116 aa).

This sequence belongs to the bacterial ribosomal protein bL20 family.

In terms of biological role, binds directly to 23S ribosomal RNA and is necessary for the in vitro assembly process of the 50S ribosomal subunit. It is not involved in the protein synthesizing functions of that subunit. The protein is Large ribosomal subunit protein bL20 of Phocaeicola vulgatus (strain ATCC 8482 / DSM 1447 / JCM 5826 / CCUG 4940 / NBRC 14291 / NCTC 11154) (Bacteroides vulgatus).